Reading from the N-terminus, the 215-residue chain is ATP phosphoribosyltransferase (215 aa).

This sequence belongs to the ATP phosphoribosyltransferase family. Short subfamily. As to quaternary structure, heteromultimer composed of HisG and HisZ subunits.

The protein localises to the cytoplasm. It catalyses the reaction 1-(5-phospho-beta-D-ribosyl)-ATP + diphosphate = 5-phospho-alpha-D-ribose 1-diphosphate + ATP. The protein operates within amino-acid biosynthesis; L-histidine biosynthesis; L-histidine from 5-phospho-alpha-D-ribose 1-diphosphate: step 1/9. Its function is as follows. Catalyzes the condensation of ATP and 5-phosphoribose 1-diphosphate to form N'-(5'-phosphoribosyl)-ATP (PR-ATP). Has a crucial role in the pathway because the rate of histidine biosynthesis seems to be controlled primarily by regulation of HisG enzymatic activity. The sequence is that of ATP phosphoribosyltransferase from Cyanothece sp. (strain PCC 7425 / ATCC 29141).